A 57-amino-acid polypeptide reads, in one-letter code: TICLLLFPLTVVPLDGDQPAHQPAVRKHNIKSAVQLRQWDEEQQCCTGQCHICWPCC.

An N-terminal signal peptide occupies residues 1-16; it reads TICLLLFPLTVVPLDG. Positions 17–44 are excised as a propeptide; the sequence is DQPAHQPAVRKHNIKSAVQLRQWDEEQQ. Disulfide bonds link cysteine 45–cysteine 57, cysteine 46–cysteine 53, and cysteine 50–cysteine 56.

It belongs to the conotoxin M superfamily. As to expression, expressed by the venom duct.

The protein localises to the secreted. The polypeptide is Conotoxin reg3.17 (Conus regius (Crown cone)).